A 263-amino-acid polypeptide reads, in one-letter code: DNA repair protein RecO (263 aa).

The interval 243–263 (DRKETARETVPTSDGTASNAV) is disordered. A compositionally biased stretch (polar residues) spans 252–263 (VPTSDGTASNAV).

It belongs to the RecO family.

Functionally, involved in DNA repair and RecF pathway recombination. This Neisseria meningitidis serogroup C / serotype 2a (strain ATCC 700532 / DSM 15464 / FAM18) protein is DNA repair protein RecO.